A 510-amino-acid polypeptide reads, in one-letter code: Leucine-rich repeat protein lrrA (510 aa).

20 LRR repeats span residues 14–34, 35–59, 60–82, 84–106, 107–130, 132–152, 153–176, 177–200, 202–222, 224–245, 246–270, 272–292, 293–315, 316–340, 341–363, 365–386, 387–408, 410–432, 433–458, and 460–478; these read YRKR…PPTI, GALQ…IGKL, SKVE…IGSL, TLKQ…NIGA, LKNL…ISNC, ALEY…EFGK, LYNL…ISGW, VKLE…CLLG, LSTL…LSSM, SLTN…LSNL, RQLK…LLSE, IELD…IATL, INLQ…VGNL, INLQ…IGKL, VNLK…IASM, ALKE…IGEL, SGLT…SFGN, SELQ…LDGL, KSCT…LIGL, and ILDV…IVMK.

It localises to the cytoplasm. Functionally, involved in cytoskeleton remodeling, which is needed for normal chemotactic aggregation and efficient cell sorting during multicellular morphogenesis. This chain is Leucine-rich repeat protein lrrA (lrrA), found in Dictyostelium discoideum (Social amoeba).